The primary structure comprises 486 residues: Malonate-semialdehyde dehydrogenase (486 aa).

Phe154, Lys178, Glu181, Arg182, and Ser231 together coordinate NAD(+). Catalysis depends on Cys286, which acts as the Nucleophile. Residue Glu386 coordinates NAD(+).

Belongs to the aldehyde dehydrogenase family. IolA subfamily. Homotetramer.

The enzyme catalyses 3-oxopropanoate + NAD(+) + CoA + H2O = hydrogencarbonate + acetyl-CoA + NADH + H(+). The catalysed reaction is 2-methyl-3-oxopropanoate + NAD(+) + CoA + H2O = propanoyl-CoA + hydrogencarbonate + NADH + H(+). It participates in polyol metabolism; myo-inositol degradation into acetyl-CoA; acetyl-CoA from myo-inositol: step 7/7. Catalyzes the oxidation of malonate semialdehyde (MSA) and methylmalonate semialdehyde (MMSA) into acetyl-CoA and propanoyl-CoA, respectively. Is involved in a myo-inositol catabolic pathway. Bicarbonate, and not CO2, is the end-product of the enzymatic reaction. This Bacillus cereus (strain G9842) protein is Malonate-semialdehyde dehydrogenase.